We begin with the raw amino-acid sequence, 361 residues long: Isopentenyl-diphosphate delta-isomerase (361 aa).

12–13 contacts substrate; the sequence is RK. FMN-binding positions include S70, 71-73, S101, and N130; that span reads SMT. 101–103 provides a ligand contact to substrate; the sequence is SMR. Q165 provides a ligand contact to substrate. Residue E166 coordinates Mg(2+). Residues K197 and 310–311 each bind FMN; that span reads AG.

This sequence belongs to the IPP isomerase type 2 family. In terms of assembly, homooctamer. Dimer of tetramers. FMN is required as a cofactor. The cofactor is NADPH. It depends on Mg(2+) as a cofactor.

Its subcellular location is the cytoplasm. It carries out the reaction isopentenyl diphosphate = dimethylallyl diphosphate. Its function is as follows. Involved in the biosynthesis of isoprenoids. Catalyzes the 1,3-allylic rearrangement of the homoallylic substrate isopentenyl (IPP) to its allylic isomer, dimethylallyl diphosphate (DMAPP). The sequence is that of Isopentenyl-diphosphate delta-isomerase from Chlorobium luteolum (strain DSM 273 / BCRC 81028 / 2530) (Pelodictyon luteolum).